Here is a 268-residue protein sequence, read N- to C-terminus: Bidirectional sugar transporter N3 (268 aa).

The Extracellular segment spans residues 1–7 (MAISHNT). A helical transmembrane segment spans residues 8–28 (LAFTFGMLGNVISFLVFLAPI). One can recognise a MtN3/slv 1 domain in the interval 10–96 (FTFGMLGNVI…ILYIIYAPRD (87 aa)). At 29–42 (STFYRIYKKKSTEG) the chain is on the cytoplasmic side. The helical transmembrane segment at 43–63 (FQSLPYLVALFSSMLWLYYAL) threads the bilayer. Residues 64–70 (LKKDAFL) are Extracellular-facing. Residues 71–91 (LITINSFGCVVETIYIILYII) form a helical membrane-spanning segment. Residues 92–103 (YAPRDARNLTFK) are Cytoplasmic-facing. A helical membrane pass occupies residues 104–124 (LLSAMNVGSFALILIVTNYAV). Residues 125 to 131 (HGPLRVQ) are Extracellular-facing. The region spanning 131–214 (QVLGWVCVSL…QMLLYAIYRN (84 aa)) is the MtN3/slv 2 domain. A helical membrane pass occupies residues 132-152 (VLGWVCVSLSVSVFAAPLSIV). The Cytoplasmic segment spans residues 153–165 (AQVVRTKSVEFMP). The chain crosses the membrane as a helical span at residues 166 to 186 (FNLSFTLTLSATMWFGYGFFL). At 187–190 (KDIC) the chain is on the extracellular side. A helical membrane pass occupies residues 191–211 (IXLPNVLGXVLGLLQMLLYAI). Residues 212–268 (YRNGGEKAMKKEKKAPIEPPKSIVIETQLEKIEQEKKNKDDDNEEKDKSEEPIGCGV) lie on the Cytoplasmic side of the membrane. A coiled-coil region spans residues 234-262 (IVIETQLEKIEQEKKNKDDDNEEKDKSEE). Positions 243–262 (IEQEKKNKDDDNEEKDKSEE) are enriched in basic and acidic residues. The segment at 243–268 (IEQEKKNKDDDNEEKDKSEEPIGCGV) is disordered.

Belongs to the SWEET sugar transporter family. In terms of assembly, forms homooligomers and/or heterooligomers.

The protein localises to the cell membrane. Functionally, mediates both low-affinity uptake and efflux of sugar across the plasma membrane. The protein is Bidirectional sugar transporter N3 (N3) of Medicago truncatula (Barrel medic).